A 209-amino-acid chain; its full sequence is Protein TIFY 11c (209 aa).

Residues 93-128 (EITEKAQLTIFYGGSVVVFDDFPAEKAGELMKLAGS) enclose the Tify domain. The Jas motif lies at 153-177 (PIARKVSLQRFLEKRKNRIVVAEPL). A Nuclear localization signal motif is present at residues 155 to 162 (ARKVSLQR). The interval 175-209 (EPLPESEKKEAESSKRAKKDDGGASWLQVNPTLSL) is disordered. Positions 179-196 (ESEKKEAESSKRAKKDDG) are enriched in basic and acidic residues.

It belongs to the TIFY/JAZ family. In terms of processing, ubiquitinated. Targeted for degradation by the SCF(COI1) E3 ubiquitin ligase-proteasome pathway during jasmonate signaling.

The protein resides in the nucleus. In terms of biological role, repressor of jasmonate responses. The polypeptide is Protein TIFY 11c (Oryza sativa subsp. indica (Rice)).